We begin with the raw amino-acid sequence, 368 residues long: Probable staphylococcal-like nuclease CAN2 (368 aa).

Glycine 2 carries N-myristoyl glycine lipidation. Cysteine 7 is lipidated: S-palmitoyl cysteine. Positions 16-56 (DHYPYYKPTSRPHYQPPHYHGQPAAPPAPLQQQHLGPHGVT) are disordered. Low complexity predominate over residues 27–38 (PHYQPPHYHGQP). One can recognise a TNase-like domain in the interval 168 to 344 (NTLPVYDKCI…RAANRGLWAS (177 aa)). Aspartate 181 contributes to the Ca(2+) binding site. The active site involves arginine 251. Aspartate 256 is a Ca(2+) binding site. Catalysis depends on residues glutamate 259 and arginine 293.

It belongs to the thermonuclease family. The cofactor is Ca(2+).

The protein resides in the cell membrane. In terms of biological role, enzyme that catalyzes the hydrolysis of both DNA and RNA at the 5' position of the phosphodiester bond. The chain is Probable staphylococcal-like nuclease CAN2 from Oryza sativa subsp. japonica (Rice).